The sequence spans 156 residues: 6,7-dimethyl-8-ribityllumazine synthase (156 aa).

5-amino-6-(D-ribitylamino)uracil is bound by residues phenylalanine 22, alanine 56–glutamate 58, and valine 80–isoleucine 82. Serine 85–threonine 86 contributes to the (2S)-2-hydroxy-3-oxobutyl phosphate binding site. Residue histidine 88 is the Proton donor of the active site. Position 113 (phenylalanine 113) interacts with 5-amino-6-(D-ribitylamino)uracil. Arginine 127 serves as a coordination point for (2S)-2-hydroxy-3-oxobutyl phosphate.

Belongs to the DMRL synthase family.

It catalyses the reaction (2S)-2-hydroxy-3-oxobutyl phosphate + 5-amino-6-(D-ribitylamino)uracil = 6,7-dimethyl-8-(1-D-ribityl)lumazine + phosphate + 2 H2O + H(+). Its pathway is cofactor biosynthesis; riboflavin biosynthesis; riboflavin from 2-hydroxy-3-oxobutyl phosphate and 5-amino-6-(D-ribitylamino)uracil: step 1/2. Catalyzes the formation of 6,7-dimethyl-8-ribityllumazine by condensation of 5-amino-6-(D-ribitylamino)uracil with 3,4-dihydroxy-2-butanone 4-phosphate. This is the penultimate step in the biosynthesis of riboflavin. This Streptococcus agalactiae serotype Ia (strain ATCC 27591 / A909 / CDC SS700) protein is 6,7-dimethyl-8-ribityllumazine synthase.